The sequence spans 70 residues: Large ribosomal subunit protein uL29 (70 aa).

It belongs to the universal ribosomal protein uL29 family.

This Rickettsia bellii (strain OSU 85-389) protein is Large ribosomal subunit protein uL29.